Consider the following 94-residue polypeptide: Putative pterin-4-alpha-carbinolamine dehydratase (94 aa).

Belongs to the pterin-4-alpha-carbinolamine dehydratase family.

The enzyme catalyses (4aS,6R)-4a-hydroxy-L-erythro-5,6,7,8-tetrahydrobiopterin = (6R)-L-erythro-6,7-dihydrobiopterin + H2O. The polypeptide is Putative pterin-4-alpha-carbinolamine dehydratase (Caulobacter vibrioides (strain ATCC 19089 / CIP 103742 / CB 15) (Caulobacter crescentus)).